The sequence spans 307 residues: Nucleotide-binding protein ACP_0619 (307 aa).

The span at 1-14 (MPAPEPTRRAKKDA) shows a compositional bias: basic and acidic residues. Residues 1-23 (MPAPEPTRRAKKDASASPSPAHP) are disordered. 33–40 (GLSGAGKG) lines the ATP pocket. GTP is bound at residue 83–86 (DVRE).

This sequence belongs to the RapZ-like family.

In terms of biological role, displays ATPase and GTPase activities. The protein is Nucleotide-binding protein ACP_0619 of Acidobacterium capsulatum (strain ATCC 51196 / DSM 11244 / BCRC 80197 / JCM 7670 / NBRC 15755 / NCIMB 13165 / 161).